Reading from the N-terminus, the 237-residue chain is Probable Bax inhibitor 1 (237 aa).

At 1-29 the chain is on the cytoplasmic side; the sequence is MNVFDRNINFDSLFKFSQISHSTQVHLKN. A helical transmembrane segment spans residues 30-50; the sequence is VYSSLAVCMFVAAAGSYVHVV. At 51–52 the chain is on the lumenal side; it reads TR. Residues 53 to 73 traverse the membrane as a helical segment; the sequence is LFQGGMLSVLGSLGMMFWLAM. Over 74 to 86 the chain is Cytoplasmic; it reads TPHNSETEKKRLA. The helical transmembrane segment at 87-107 threads the bilayer; it reads ILAGFAFLTGVGLCPTLDFVI. Topologically, residues 108 to 112 are lumenal; sequence AINPS. Residues 113–133 form a helical membrane-spanning segment; that stretch reads IIVTAFLGTSVIFVCFTLSAL. The Cytoplasmic segment spans residues 134–139; it reads YAKRRS. A helical membrane pass occupies residues 140-160; sequence YLFLGGTLMSGLSILFLMSMM. The Lumenal portion of the chain corresponds to 161–166; sequence NMFFGS. Residues 167–187 form a helical membrane-spanning segment; it reads VMLFKAHMYLGLLIMCGFVLX. The Cytoplasmic segment spans residues 188–206; the sequence is DTQLIIEKAENGDKDYVWH. The helical intramembrane region spans 207 to 227; it reads SVDLFLDFITIFRKLMVILAL. Topologically, residues 228 to 237 are cytoplasmic; the sequence is NDKDKKKEKK.

This sequence belongs to the BI1 family. As to expression, highly abundant in testis.

The protein localises to the endoplasmic reticulum membrane. Functionally, suppressor of apoptosis. Modulates unfolded protein response signaling. Modulate ER calcium homeostasis by acting as a calcium-leak channel. This chain is Probable Bax inhibitor 1 (tmbim6), found in Paralichthys olivaceus (Bastard halibut).